Reading from the N-terminus, the 425-residue chain is MAGSNDVAKVMKTLDGMREGLIQTAVELGSIEAPTGREGAAGDYVYEWMARNGFGPERVGVFDDRFNVVGRLRGTGGGASLSFNSHLDTIMAREDTARFADANDRIYHEAWHEEGRIYGYSVVNCKGPMACWLIAAKALKEAGAALKGDVVLTAVCGEIDCEPVDEFQGHDYLAEDIGARYAISHGAISDYALVAEATNFKPAWVEAGKVFLKVTVFAGPSRYTPYVPRPVAALDSPNAIVRMAKLVEALEEWADNYEKRYTREYGGGTVVPKVAIGAIRGGVPYKIYRFPELCSIYMDIRLNPDTNPLVVQREVEAVVSKLGLKAEVKPFLFRRGYEAQGIEPLQNALEVAHREVVGRPTERPGSPECSMWRDTNPYNELGIPSLTYGCGGGAGGGNTYFLVDDMLKAAKVYAMTAMDLCNRTP.

The active site involves Asp88. The active-site Proton acceptor is the Glu158.

The protein belongs to the peptidase M20A family. Co(2+) is required as a cofactor. The cofactor is Mn(2+). Zn(2+) serves as cofactor. It depends on Fe(2+) as a cofactor. Requires Ni(2+) as cofactor.

It catalyses the reaction 5-nitroanthranilate + H2O + H(+) = 5-nitrosalicylate + NH4(+). In terms of biological role, catalyzes the deamination of 5-nitroanthranilate (5NAA) to 5-nitrosalicylate (5NSA), the first step in biodegradation of 5-nitroanthranilate. The protein is 5-nitroanthranilic acid aminohydrolase (naaA) of Bradyrhizobium sp.